A 249-amino-acid chain; its full sequence is UDP-N-acetyl-D-mannosaminuronic acid transferase (249 aa).

This sequence belongs to the glycosyltransferase 26 family.

It catalyses the reaction UDP-N-acetyl-alpha-D-mannosaminouronate + N-acetyl-alpha-D-glucosaminyl-di-trans,octa-cis-undecaprenyl diphosphate = beta-D-ManNAcA-(1-&gt;4)-alpha-D-GlcNAc-di-trans,octa-cis-undecaprenyl diphosphate + UDP + H(+). It participates in bacterial outer membrane biogenesis; enterobacterial common antigen biosynthesis. In terms of biological role, catalyzes the synthesis of Und-PP-GlcNAc-ManNAcA (Lipid II), the second lipid-linked intermediate involved in enterobacterial common antigen (ECA) synthesis. The protein is UDP-N-acetyl-D-mannosaminuronic acid transferase of Pectobacterium atrosepticum (strain SCRI 1043 / ATCC BAA-672) (Erwinia carotovora subsp. atroseptica).